Here is a 276-residue protein sequence, read N- to C-terminus: Undecaprenyl-diphosphatase 2 (276 aa).

The next 8 helical transmembrane spans lie at 1 to 21 (MSLW…LFPV), 44 to 64 (QLLP…LWYF), 87 to 107 (GHLM…GLLL), 114 to 134 (VFHD…LLWL), 150 to 170 (LTFK…IPGF), 190 to 210 (AAEF…LLEL), 222 to 242 (DALL…RFLM), and 251 to 271 (LASF…WFMF).

It belongs to the UppP family.

Its subcellular location is the cell inner membrane. The catalysed reaction is di-trans,octa-cis-undecaprenyl diphosphate + H2O = di-trans,octa-cis-undecaprenyl phosphate + phosphate + H(+). Its function is as follows. Catalyzes the dephosphorylation of undecaprenyl diphosphate (UPP). Confers resistance to bacitracin. The protein is Undecaprenyl-diphosphatase 2 of Burkholderia thailandensis (strain ATCC 700388 / DSM 13276 / CCUG 48851 / CIP 106301 / E264).